The chain runs to 471 residues: Putative multidrug resistance protein MdtD (471 aa).

The Periplasmic portion of the chain corresponds to 1 to 11 (MTDLPDSTRWQ). The helical transmembrane segment at 12 to 32 (LWIVAFGFFMQSLDTTIVNTA) threads the bilayer. Topologically, residues 33–48 (LPSMAQSLGESPLHMH) are cytoplasmic. Residues 49–69 (MVIVSYVLTVAVMLPASGWLA) form a helical membrane-spanning segment. Over 70 to 76 (DKVGVRN) the chain is Periplasmic. A helical membrane pass occupies residues 77 to 97 (IFFTAIVLFTLGSLFCALSGT). The Cytoplasmic segment spans residues 98-101 (LNEL). A helical membrane pass occupies residues 102–124 (LLARALQGVGGAMMVPVGRLTVM). The Periplasmic portion of the chain corresponds to 125-137 (KIVPREQYMAAMT). A helical membrane pass occupies residues 138 to 158 (FVTLPGQIGPLLGPALGGLLV). The Cytoplasmic portion of the chain corresponds to 159 to 164 (EYASWH). The helical transmembrane segment at 165 to 185 (WIFLINIPVGIIGAITTLMLM) threads the bilayer. At 186–196 (PNYTMQTRRFD) the chain is on the periplasmic side. Residues 197-217 (LSGFLLLAVGMAVLTLALDGS) form a helical membrane-spanning segment. Residues 218 to 224 (KGTGFSP) lie on the Cytoplasmic side of the membrane. Residues 225 to 245 (LAIAGLVAVGVVALVLYLLHA) form a helical membrane-spanning segment. At 246-262 (QNNNRALFSLKLFRTRT) the chain is on the periplasmic side. A helical transmembrane segment spans residues 263–283 (FSLGLAGSFAGRIGSGMLPFM). At 284-285 (TP) the chain is on the cytoplasmic side. Residues 286–306 (VFLQIGFGFSPFHAGLMMIPM) form a helical membrane-spanning segment. Residues 307-341 (VLGSMGMKRIVVQVVNRFGYRRVLVATTLGLSLVT) lie on the Periplasmic side of the membrane. A helical transmembrane segment spans residues 342–362 (LLFMTTALLGWYYVLPFVLFL). At 363-395 (QGMVNSTRFSSMNTLTLKDLPDNLASSGNSLLS) the chain is on the cytoplasmic side. The helical transmembrane segment at 396 to 416 (MIMQLSMSIGVTIAGLLLGLF) threads the bilayer. Over 417–430 (GSQHVSVDSGTTQT) the chain is Periplasmic. The chain crosses the membrane as a helical span at residues 431 to 451 (VFMYTWLSMASIIALPAFIFA). The Cytoplasmic portion of the chain corresponds to 452 to 471 (RVPNDTHQNVAISRRKRSAQ).

It belongs to the major facilitator superfamily. TCR/Tet family.

It is found in the cell inner membrane. The protein is Putative multidrug resistance protein MdtD of Escherichia coli O6:H1 (strain CFT073 / ATCC 700928 / UPEC).